Here is a 995-residue protein sequence, read N- to C-terminus: MPPHGPNSQGGRRGGGHSSGRRGGRGGGGRGGGGGGRGEQRWWDPVWRAERLRQQQAEMEVLDENEWWNKIEQWKTGGEQEMLIKRNFSRGDQQTLSDMALQMGLYFHAYNKGKALVVSKVPLPDYRADLDERHGSTQKEIKMSTETERKLGSLLKTTQESGSSGASASAFNDQQDRTSTLGLKRPDSASKLPDSLEKEKFSFALKERQEKLKATESVKALKAFREKLPAFKMKEEFLNSVSQNQVLVVSGETGCGKTTQLPQFILEEEISSLRGADCNIICTQPRRISAISVASRISAERGESIGESVGYQIRLESKRSDQTRLLFCTTGVLLRRLIEDPNLTNVSHLLVDEIHERGMNEDFLLIILRDLLPRRPDLRLILMSATINADMFSTYFGNSPTMHIPGFTFPVAELFLEDVLEKSRYNIKSSDSGNYQGSSRGRRRESESKKDDLTTLFEDIDINSHYKSYSSATRNSLEAWSGAQIDVDLVEATIEHICRLEGGGAILVFLTGWDEISKLLEKINMNNFLGDSSKFLVLPLHGSMPTVNQREIFDRPPPNKRKIVLATNIAESSITIDDVVYVVDCGKAKETSYDALNKVACLLPSWISKASAHQRRGRAGRVQAGVCYRLYPKVIYDAFPQYQLPEIIRTPLQELCLHIKSLQVGSIGSFLAKALQPPDALAVENAIELLKTIGALNDVEELTPLGRHLCTLPVDPNIGKMLLIGAIFQCVNPALTIAAALAYRSPFVLPLNRKEEADEAKRYFAGDSCSDHIALLKAYEGYRDAKRGGNEKDFCWQNFLSPVTLRMMEDMRNQFLDLLSDIGFVDKSKPNAYNQYSYDMEMISAVLCAGLYPNVVQCKRRGKRTAFYTKELGKVDIHPGSVNARVNLFSLPYLVYSEKVKTTSVYIRDSTNISDYALLMFGGNLIPSKTGEGIEMLGGYLHFSASKNILELIQRLRGEVDKLLNKKIEDPSLDITVEGKGVVSAVVELLRSQKH.

Disordered stretches follow at residues 1–42 (MPPH…EQRW) and 156–192 (KTTQ…ASKL). Over residues 25–37 (RGGGGRGGGGGGR) the composition is skewed to gly residues. The span at 161-170 (SGSSGASASA) shows a compositional bias: low complexity. Positions 171-181 (FNDQQDRTSTL) are enriched in polar residues. The region spanning 238–405 (LNSVSQNQVL…FGNSPTMHIP (168 aa)) is the Helicase ATP-binding domain. 251–258 (GETGCGKT) contributes to the ATP binding site. The short motif at 352-355 (DEIH) is the DEIH box element. The disordered stretch occupies residues 429–450 (SSDSGNYQGSSRGRRRESESKK). The Helicase C-terminal domain maps to 484 to 663 (QIDVDLVEAT…ELCLHIKSLQ (180 aa)).

The protein belongs to the DExH box helicase family.

It carries out the reaction ATP + H2O = ADP + phosphate + H(+). This Arabidopsis thaliana (Mouse-ear cress) protein is DExH-box ATP-dependent RNA helicase DExH1.